The primary structure comprises 388 residues: Succinate--CoA ligase [ADP-forming] subunit beta (388 aa).

The ATP-grasp domain maps to 9–244; that stretch reads KEILRKYGVT…LDEEDPAEIE (236 aa). Residues lysine 46, 53–55, glutamate 99, alanine 102, and glutamate 107 contribute to the ATP site; that span reads GRG. The Mg(2+) site is built by asparagine 199 and aspartate 213. Substrate-binding positions include asparagine 264 and 321–323; that span reads GIM.

It belongs to the succinate/malate CoA ligase beta subunit family. Heterotetramer of two alpha and two beta subunits. The cofactor is Mg(2+).

The enzyme catalyses succinate + ATP + CoA = succinyl-CoA + ADP + phosphate. It carries out the reaction GTP + succinate + CoA = succinyl-CoA + GDP + phosphate. It participates in carbohydrate metabolism; tricarboxylic acid cycle; succinate from succinyl-CoA (ligase route): step 1/1. Succinyl-CoA synthetase functions in the citric acid cycle (TCA), coupling the hydrolysis of succinyl-CoA to the synthesis of either ATP or GTP and thus represents the only step of substrate-level phosphorylation in the TCA. The beta subunit provides nucleotide specificity of the enzyme and binds the substrate succinate, while the binding sites for coenzyme A and phosphate are found in the alpha subunit. The chain is Succinate--CoA ligase [ADP-forming] subunit beta from Janthinobacterium sp. (strain Marseille) (Minibacterium massiliensis).